The chain runs to 2365 residues: TRIO and F-actin-binding protein (2365 aa).

Disordered regions lie at residues 48-1106 (VPYC…HEPL), 1168-1554 (HRDA…SERR), 1593-1667 (LPRK…WPKI), and 1679-1751 (AGLE…TSWR). The span at 132-151 (SDPTSSPDSATPDDTSNSSS) shows a compositional bias: low complexity. His221 is modified (phosphothreonine). Polar residues-rich tracts occupy residues 239–271 (TLTQ…QAAS), 291–375 (RASS…TPQR), 403–422 (RTSC…SPNR), 429–471 (RTSC…SPNR), 478–520 (RTSC…SPNR), 527–569 (RTSC…SPNR), 576–618 (RTSC…SPNR), 625–650 (RTSC…SPRT), 661–674 (SSPN…NPRT), 683–701 (RASS…TSCA), 709–722 (SSPN…NPRT), 745–785 (RTSC…SPNR), and 807–837 (IRAT…PKTS). Residues 324–348 (STQEDTPRASSTQWNTPRASSPSRS) form an essentiel for its aggregation region. A Phosphothreonine modification is found at Gln457. Over residues 839-854 (TKRDNLRPTCTQRDRT) the composition is skewed to basic and acidic residues. Polar residues-rich tracts occupy residues 855–898 (QSFS…SSPH), 913–927 (PTQS…PSRS), and 945–994 (DRPQ…TSSP). A compositionally biased stretch (basic and acidic residues) spans 1045 to 1056 (RAPESEPPHHEP). Residues 1195–1206 (SMESLAPSTDSL) are compositionally biased toward polar residues. 2 stretches are compositionally biased toward basic and acidic residues: residues 1260 to 1270 (ETRHNLEREEY) and 1303 to 1319 (GRAE…RKSE). The span at 1332–1349 (SQQPSQGQSQLLRRQSSP) shows a compositional bias: low complexity. Basic and acidic residues-rich tracts occupy residues 1378–1387 (SPEKRPEGDR) and 1402–1411 (TPERELRTQR). Gly residues predominate over residues 1452–1461 (GGLGPGGWWG). A compositionally biased stretch (basic and acidic residues) spans 1494 to 1508 (WEEKPTHELPRELGK). Positions 1524 to 1534 (ESSQSWHSGTP) are enriched in polar residues. A compositionally biased stretch (basic and acidic residues) spans 1594-1606 (PRKDPAGHRDDLA). Residues 1645-1664 (ALQSQSPVQLPSPACTSTQW) are compositionally biased toward polar residues. Residues 1696–1705 (PSLPELQFQP) show a composition bias toward low complexity. Basic and acidic residues predominate over residues 1724–1735 (KQADSADKRPAE). Residues 1778–1887 (LNFKKGWMSI…WIEALRKTVR (110 aa)) form the PH domain. The residue at position 1796 (Ser1796) is a Phosphoserine. Disordered regions lie at residues 1889–2017 (TSAP…LTED) and 2174–2194 (LSKT…HQSD). At Arg1930 the chain carries Omega-N-methylarginine. Ser1949 and Ser1955 each carry phosphoserine. The segment covering 1965 to 1997 (TPDRLAKQEELERDLAQRSEERRKWFEATDSRT) has biased composition (basic and acidic residues). 2 coiled-coil regions span residues 2062 to 2247 (SDGH…NQEL) and 2281 to 2361 (ELEV…SMRN).

Isoform 1 forms aggregates. Isoform 1 binds to TRIO and F-actin. Isoform 1 may also interact with myosin II. Interacts with HECTD3. Interacts with PJVK. Interacts with TERF1; mediates TERF1 localization to the centrosome. Ubiquitinated by HECTD3, leading to its degradation by the proteasome. In terms of processing, phosphorylation at Thr-457 by PLK1 ensures mitotic progression and is essential for accurate chromosome segregation. Phosphorylation at residues Thr-221 and Thr-457 by kinase NEK2A and PLK1 coordinates TERF1 translocation from telomere to spindle pole. In terms of tissue distribution, widely expressed. Highly expressed in heart and placenta. As to expression, expressed in fetal brain, retina and cochlea but is not detectable in the other tissues.

It is found in the nucleus. Its subcellular location is the cytoplasm. The protein localises to the cytoskeleton. It localises to the microtubule organizing center. The protein resides in the centrosome. It is found in the midbody. Its subcellular location is the chromosome. The protein localises to the telomere. Functionally, regulates actin cytoskeletal organization, cell spreading and cell contraction by directly binding and stabilizing filamentous F-actin and prevents its depolymerization. May also serve as a linker protein to recruit proteins required for F-actin formation and turnover. Essential for correct mitotic progression. In terms of biological role, plays a pivotal role in the formation of stereocilia rootlets. This Homo sapiens (Human) protein is TRIO and F-actin-binding protein (TRIOBP).